A 512-amino-acid polypeptide reads, in one-letter code: Cytochrome P450 26B1 (512 aa).

Position 441 (C441) interacts with heme.

This sequence belongs to the cytochrome P450 family. Heme serves as cofactor.

Its subcellular location is the endoplasmic reticulum membrane. It is found in the microsome membrane. It catalyses the reaction all-trans-retinoate + reduced [NADPH--hemoprotein reductase] + O2 = all-trans-4-hydroxyretinoate + oxidized [NADPH--hemoprotein reductase] + H2O + H(+). The enzyme catalyses all-trans-retinoate + reduced [NADPH--hemoprotein reductase] + O2 = all-trans-18-hydroxyretinoate + oxidized [NADPH--hemoprotein reductase] + H2O + H(+). Functionally, a cytochrome P450 monooxygenase involved in the metabolism of retinoates (RAs), the active metabolites of vitamin A, and critical signaling molecules in animals. RAs exist as at least four different isomers: all-trans-RA (atRA), 9-cis-RA, 13-cis-RA, and 9,13-dicis-RA, where atRA is considered to be the biologically active isomer, although 9-cis-RA and 13-cis-RA also have activity. Catalyzes the hydroxylation of atRA primarily at C-4 and C-18, thereby contributing to the regulation of atRA homeostasis and signaling. Hydroxylation of atRA limits its biological activity and initiates a degradative process leading to its eventual elimination. Involved in the convertion of atRA to all-trans-4-oxo-RA. Can oxidize all-trans-13,14-dihydroretinoate (DRA) to metabolites which could include all-trans-4-oxo-DRA, all-trans-4-hydroxy-DRA, all-trans-5,8-epoxy-DRA, and all-trans-18-hydroxy-DRA. Shows preference for the following substrates: atRA &gt; 9-cis-RA &gt; 13-cis-RA. Plays a central role in germ cell development: acts by degrading RAs in the developing testis, preventing STRA8 expression, thereby leading to delay of meiosis. Required for the maintenance of the undifferentiated state of male germ cells during embryonic development in Sertoli cells, inducing arrest in G0 phase of the cell cycle and preventing meiotic entry. Plays a role in skeletal development, both at the level of patterning and in the ossification of bone and the establishment of some synovial joints. Essential for postnatal survival. Also has a significant activity in oxidation of tazarotenic acid and may therefore metabolize that xenobiotic in vivo. This chain is Cytochrome P450 26B1 (Cyp26b1), found in Mus musculus (Mouse).